The chain runs to 488 residues: 3-octaprenyl-4-hydroxybenzoate carboxy-lyase (488 aa).

Asn-172 provides a ligand contact to Mn(2+). Prenylated FMN contacts are provided by residues 175–177, 189–191, and 194–195; these read IYR, RWL, and RG. Residue Glu-238 participates in Mn(2+) binding. Asp-287 serves as the catalytic Proton donor.

The protein belongs to the UbiD family. Homohexamer. Prenylated FMN is required as a cofactor. The cofactor is Mn(2+).

The protein resides in the cell membrane. It catalyses the reaction a 4-hydroxy-3-(all-trans-polyprenyl)benzoate + H(+) = a 2-(all-trans-polyprenyl)phenol + CO2. It functions in the pathway cofactor biosynthesis; ubiquinone biosynthesis. In terms of biological role, catalyzes the decarboxylation of 3-octaprenyl-4-hydroxy benzoate to 2-octaprenylphenol, an intermediate step in ubiquinone biosynthesis. In Stutzerimonas stutzeri (strain A1501) (Pseudomonas stutzeri), this protein is 3-octaprenyl-4-hydroxybenzoate carboxy-lyase.